An 853-amino-acid chain; its full sequence is DNA mismatch repair protein MutS (853 aa).

Position 614–621 (614–621 (GPNMGGKS)) interacts with ATP.

This sequence belongs to the DNA mismatch repair MutS family.

This protein is involved in the repair of mismatches in DNA. It is possible that it carries out the mismatch recognition step. This protein has a weak ATPase activity. This Klebsiella pneumoniae subsp. pneumoniae (strain ATCC 700721 / MGH 78578) protein is DNA mismatch repair protein MutS.